The chain runs to 149 residues: Ribonuclease HI (149 aa).

The RNase H type-1 domain maps to 1–142; sequence MTPKVTIYTD…ADALANEGLR (142 aa). Aspartate 10, glutamate 48, aspartate 70, and aspartate 134 together coordinate Mg(2+).

It belongs to the RNase H family. Monomer. The cofactor is Mg(2+).

It is found in the cytoplasm. It carries out the reaction Endonucleolytic cleavage to 5'-phosphomonoester.. In terms of biological role, endonuclease that specifically degrades the RNA of RNA-DNA hybrids. This Caulobacter vibrioides (strain ATCC 19089 / CIP 103742 / CB 15) (Caulobacter crescentus) protein is Ribonuclease HI.